The primary structure comprises 255 residues: Diphthine synthase (255 aa).

Residues Leu9, Asp85, Val88, 113–114 (SI), Leu164, Ala207, and His232 contribute to the S-adenosyl-L-methionine site.

It belongs to the diphthine synthase family. Homodimer.

The enzyme catalyses 2-[(3S)-amino-3-carboxypropyl]-L-histidyl-[translation elongation factor 2] + 3 S-adenosyl-L-methionine = diphthine-[translation elongation factor 2] + 3 S-adenosyl-L-homocysteine + 3 H(+). The protein operates within protein modification; peptidyl-diphthamide biosynthesis. S-adenosyl-L-methionine-dependent methyltransferase that catalyzes the trimethylation of the amino group of the modified target histidine residue in translation elongation factor 2 (EF-2), to form an intermediate called diphthine. The three successive methylation reactions represent the second step of diphthamide biosynthesis. The protein is Diphthine synthase of Methanococcus maripaludis (strain C5 / ATCC BAA-1333).